Here is a 396-residue protein sequence, read N- to C-terminus: Tyrosine--tRNA ligase (396 aa).

The 'HIGH' region signature appears at proline 42–histidine 51. The short motif at lysine 226–serine 230 is the 'KMSKS' region element. Position 229 (lysine 229) interacts with ATP. The region spanning leucine 334–isoleucine 395 is the S4 RNA-binding domain.

Belongs to the class-I aminoacyl-tRNA synthetase family. TyrS type 2 subfamily. As to quaternary structure, homodimer.

The protein resides in the cytoplasm. The enzyme catalyses tRNA(Tyr) + L-tyrosine + ATP = L-tyrosyl-tRNA(Tyr) + AMP + diphosphate + H(+). In terms of biological role, catalyzes the attachment of tyrosine to tRNA(Tyr) in a two-step reaction: tyrosine is first activated by ATP to form Tyr-AMP and then transferred to the acceptor end of tRNA(Tyr). This is Tyrosine--tRNA ligase from Francisella tularensis subsp. tularensis (strain SCHU S4 / Schu 4).